Here is a 278-residue protein sequence, read N- to C-terminus: Probable endonuclease 4 (278 aa).

Residues His66, His106, Glu140, Asp172, His175, His209, Asp222, His224, and Glu254 each coordinate Zn(2+).

It belongs to the AP endonuclease 2 family. It depends on Zn(2+) as a cofactor.

It carries out the reaction Endonucleolytic cleavage to 5'-phosphooligonucleotide end-products.. Endonuclease IV plays a role in DNA repair. It cleaves phosphodiester bonds at apurinic or apyrimidinic (AP) sites, generating a 3'-hydroxyl group and a 5'-terminal sugar phosphate. This Haloquadratum walsbyi (strain DSM 16790 / HBSQ001) protein is Probable endonuclease 4.